A 502-amino-acid polypeptide reads, in one-letter code: ATP synthase subunit alpha (502 aa).

169–176 (GDRQTGKT) contacts ATP.

This sequence belongs to the ATPase alpha/beta chains family. F-type ATPases have 2 components, CF(1) - the catalytic core - and CF(0) - the membrane proton channel. CF(1) has five subunits: alpha(3), beta(3), gamma(1), delta(1), epsilon(1). CF(0) has three main subunits: a(1), b(2) and c(9-12). The alpha and beta chains form an alternating ring which encloses part of the gamma chain. CF(1) is attached to CF(0) by a central stalk formed by the gamma and epsilon chains, while a peripheral stalk is formed by the delta and b chains.

It is found in the cell membrane. It carries out the reaction ATP + H2O + 4 H(+)(in) = ADP + phosphate + 5 H(+)(out). In terms of biological role, produces ATP from ADP in the presence of a proton gradient across the membrane. The alpha chain is a regulatory subunit. The protein is ATP synthase subunit alpha of Staphylococcus aureus (strain bovine RF122 / ET3-1).